Here is a 173-residue protein sequence, read N- to C-terminus: MANITVFYNEDFQGKQVDLPPGNYTRAQLAALGIENNTISSVKVPPGVKAILYQNDGFAGDQIEVVANAEELGPLNNNVSSIRVISVPVQPRARFFYKEQFDGKEVDLPPGQYTQAELERYGIDNNTISSVKPQGLAVVLFKNDNFSGDTLPVNSDAPTLGAMNNNTSSIRIS.

2 Beta/gamma crystallin 'Greek key' domains span residues 2–46 (ANIT…KVPP) and 48–86 (VKAI…RVIS). The Ca(2+) site is built by Tyr8, Asn37, Thr38, Ser40, Gln54, Asn77, Asn78, and Ser80. Residues 87-90 (VPVQ) are connecting peptide. 2 Beta/gamma crystallin 'Greek key' domains span residues 91-135 (PRAR…KPQG) and 136-173 (LAVV…IRIS).

This sequence belongs to the beta/gamma-crystallin family.

In terms of biological role, protein S, induced in large amounts during fruiting body formation, assembles on the surface of myxospores in the presence of calcium ions. The chain is Development-specific protein S (tps) from Myxococcus xanthus.